Consider the following 175-residue polypeptide: NADH-quinone oxidoreductase subunit I 2 (175 aa).

2 consecutive 4Fe-4S ferredoxin-type domains span residues 50–82 (HVLQ…IEAA) and 98–127 (KVYN…HGHG). Cys62, Cys65, Cys68, Cys72, Cys107, Cys110, Cys113, and Cys117 together coordinate [4Fe-4S] cluster.

It belongs to the complex I 23 kDa subunit family. In terms of assembly, NDH-1 is composed of 14 different subunits. Subunits NuoA, H, J, K, L, M, N constitute the membrane sector of the complex. Requires [4Fe-4S] cluster as cofactor.

It localises to the cell inner membrane. The catalysed reaction is a quinone + NADH + 5 H(+)(in) = a quinol + NAD(+) + 4 H(+)(out). NDH-1 shuttles electrons from NADH, via FMN and iron-sulfur (Fe-S) centers, to quinones in the respiratory chain. The immediate electron acceptor for the enzyme in this species is believed to be ubiquinone. Couples the redox reaction to proton translocation (for every two electrons transferred, four hydrogen ions are translocated across the cytoplasmic membrane), and thus conserves the redox energy in a proton gradient. The chain is NADH-quinone oxidoreductase subunit I 2 from Koribacter versatilis (strain Ellin345).